The primary structure comprises 358 residues: Dihydroorotate dehydrogenase (quinone) (358 aa).

Residues Ala61 to Lys65 and Gly85 each bind FMN. Lys65 lines the substrate pocket. Residue Asn110 to Leu114 participates in substrate binding. Residues Asn139 and Asn170 each coordinate FMN. Position 170 (Asn170) interacts with substrate. Ser173 acts as the Nucleophile in catalysis. A substrate-binding site is contributed by Asn175. FMN is bound by residues Lys211 and Ser239. Position 240-241 (Asn240–Thr241) interacts with substrate. Residues Gly263, Gly292, and Tyr313–Ser314 each bind FMN.

The protein belongs to the dihydroorotate dehydrogenase family. Type 2 subfamily. Monomer. FMN serves as cofactor.

The protein resides in the cell membrane. The catalysed reaction is (S)-dihydroorotate + a quinone = orotate + a quinol. Its pathway is pyrimidine metabolism; UMP biosynthesis via de novo pathway; orotate from (S)-dihydroorotate (quinone route): step 1/1. In terms of biological role, catalyzes the conversion of dihydroorotate to orotate with quinone as electron acceptor. The polypeptide is Dihydroorotate dehydrogenase (quinone) (Methylorubrum extorquens (strain CM4 / NCIMB 13688) (Methylobacterium extorquens)).